Consider the following 264-residue polypeptide: Merozoite surface protein 2 (264 aa).

The N-terminal stretch at 1 to 20 (MKVIKTLSIINFFIFVTFNI) is a signal peptide. N-linked (GlcNAc...) asparagine glycosylation is found at asparagine 22 and asparagine 36. Positions 44 to 190 (ANEGSNTNSV…PQTAENENPA (147 aa)) are polymorphic region. Residues 46–225 (EGSNTNSVGA…DSQKECTDGN (180 aa)) form a disordered region. Repeat copies occupy residues 60-91 (ADTIASGSQRSTNSASTSTTNNGESQTTTPTA) and 92-123 (ADTIASGSQRSTNSASTSTTNNGESQTTTPTA). Positions 60–123 (ADTIASGSQR…GESQTTTPTA (64 aa)) are 2 X 32 AA perfects repeats. Residues 70–81 (STNSASTSTTNN) are compositionally biased toward low complexity. The span at 82-101 (GESQTTTPTAADTIASGSQR) shows a compositional bias: polar residues. The segment covering 102–145 (STNSASTSTTNNGESQTTTPTAADTPTTTESNSPSPPITTTESS) has biased composition (low complexity). A glycan (N-linked (GlcNAc...) asparagine) is linked at asparagine 152. Residues 154–166 (TDGKGEESEKQNE) show a composition bias toward basic and acidic residues. N-linked (GlcNAc...) asparagine glycosylation is found at asparagine 168 and asparagine 213. A disulfide bridge links cysteine 221 with cysteine 229. N-linked (GlcNAc...) asparagine glycosylation is found at asparagine 237 and asparagine 238. The GPI-anchor amidated asparagine moiety is linked to residue asparagine 238. A propeptide spans 239 to 264 (SSNIASINKFVVLISATLVLSFAIFI) (removed in mature form).

Its subcellular location is the cell membrane. May play a role in the merozoite attachment to the erythrocyte. The sequence is that of Merozoite surface protein 2 from Plasmodium falciparum (isolate fid3 / India).